A 1493-amino-acid chain; its full sequence is Protein RNA-directed DNA methylation 3 (1493 aa).

Disordered stretches follow at residues 1 to 34 (MDRK…EGLR) and 54 to 96 (GYYG…SSFV). The Nuclear localization signal signature appears at 21-28 (KRKNSVEF). The segment covering 24-34 (NSVEFRDEGLR) has biased composition (basic and acidic residues). Residues 60 to 80 (SDEDDDGLGFLNDMEDEPEVE) show a composition bias toward acidic residues. The segment covering 81 to 92 (ESSKAGKGEKGK) has biased composition (basic and acidic residues). The region spanning 239 to 266 (KVSEGTWARVKNGKYKGDLAQIVAVSDT) is the KOW 1 domain. The segment at 393-432 (PTCREGGKGEGSGGGKGEGSGGGKGEGSRGGKGEGSSDFK) is disordered. Gly residues predominate over residues 401-417 (GEGSGGGKGEGSGGGKG). A compositionally biased stretch (basic and acidic residues) spans 418-432 (EGSRGGKGEGSSDFK). The KOW 2 domain occupies 501–528 (QISVNDVVKISKGPSEGKQGVVRQVYRG). Positions 578 to 602 (SSPKSPLSPEKEWQPRERYNSSNQG) are disordered. Basic and acidic residues predominate over residues 586–596 (PEKEWQPRERY). The KOW 3 domain occupies 607-634 (TYSIGQKLRIRVGPLKGYLCRVIALRYS). Disordered stretches follow at residues 692 to 711 (IGAG…PSTD), 728 to 747 (EKNP…TVAD), and 757 to 1493 (AAEN…KTGW). Repeat 1 spans residues 732 to 741 (WGGSKPTSDV). The tract at residues 732 to 1493 (WGGSKPTSDV…WGTGDKKTGW (762 aa)) is 42 X 9 AA approximate WG/GW-rich tandem repeats. Low complexity predominate over residues 757-767 (AAENKPASASD). Tandem repeats lie at residues 775–784 (WGKTPASEAG), 789–797 (WGDTSASNV), 818–827 (WGTHGGSSGG), 836–845 (WGKLCEASES), 854–863 (WGKKGGSDGE), 866–875 (WGNKDGNSSA), 883–892 (WGQQDKGSDE), 917–926 (GWNKSAEDSN), 935–943 (WGQPNDGSS), 944–953 (WGKKGDGAAS), 954–962 (WGKKDDGGS), 963–972 (WGKKDDGNKD), 978–987 (WGKKDDGQKD), 1003–1012 (WGKKDDGGSS), 1013–1022 (WGKKDDGGSL), 1023–1032 (WGKKDDGGSS), 1033–1042 (WGKEDDGGSL), 1043–1052 (WGKKDDGESS), 1053–1062 (WGKKDDGESS), 1063–1072 (WGKKDDGGSS), 1073–1082 (WGKKDEGGYS), 1132–1141 (WGKQDGDGGG), 1144–1153 (WGKENDAGGG), 1156–1165 (WGKQDNGVGS), 1167–1176 (WGKQNDGSGG), 1180–1189 (WGKQNDAGGG), 1192–1201 (WGKQDSGGDG), 1204–1213 (WGKQDGGGDS), 1217–1226 (WGKQNNTSGG), 1229–1238 (WGKQSDAGGG), 1241–1250 (WGKQDGGGGG), 1253–1262 (WGKQDGGGGS), 1266–1275 (WGKQNETSNG), 1278–1287 (WGKQNDSGGG), 1290–1299 (WGKQDGGGGG), 1302–1311 (WGKQNDGGGG), and 1314–1323 (WGKQGDGGSK). Over residues 790-812 (GDTSASNVEASSWEKQGASTSNV) the composition is skewed to polar residues. Residues 846–860 (SQKKEESSWGKKGGS) are compositionally biased toward basic and acidic residues. Over residues 866–875 (WGNKDGNSSA) the composition is skewed to polar residues. A compositionally biased stretch (basic and acidic residues) spans 955–1090 (GKKDDGGSWG…YSEQTFDRGG (136 aa)). Residues 1122-1134 (PWSKPSGGSSWGK) are compositionally biased toward low complexity. The span at 1156–1172 (WGKQDNGVGSSWGKQND) shows a compositional bias: polar residues. Gly residues predominate over residues 1186–1213 (AGGGSSWGKQDSGGDGSSWGKQDGGGDS). Residues 1218 to 1231 (GKQNNTSGGSSWGK) are compositionally biased toward polar residues. Residues 1235-1264 (AGGGSSWGKQDGGGGGSSWGKQDGGGGSGS) are compositionally biased toward gly residues. The span at 1270 to 1283 (NETSNGSSWGKQND) shows a compositional bias: polar residues. The span at 1284 to 1321 (SGGGSSWGKQDGGGGGSSWGKQNDGGGGSSWGKQGDGG) shows a compositional bias: gly residues. 2 stretches are compositionally biased toward polar residues: residues 1366–1382 (WKTD…QSGG) and 1392–1401 (DSNNSKPSGS). Residues 1389–1398 (WGEDSNNSKP) form repeat 39. Positions 1416–1430 (NSKKETNDKPGDDSK) are enriched in basic and acidic residues. The span at 1432 to 1442 (AWGTSNDQVNT) shows a compositional bias: polar residues. 3 tandem repeats follow at residues 1433–1442 (WGTSNDQVNT), 1467–1475 (WGGKTNAVA), and 1484–1493 (WGTGDKKTGW).

As to quaternary structure, interacts with AGO4 via its C-terminal region and with RNA transcripts. Binds chromatin at loci subject to transcriptional silencing downstream of RNA Polymerase V, but independently from the presence of 24-nt siRNA.

Its subcellular location is the nucleus. It localises to the nucleoplasm. In terms of biological role, effector of RNA-directed DNA methylation (RdDM) triggered by small interfering RNAs (siRNAs, 24-nt RNAs). Functions as an adapter protein that binds scaffold transcripts generated by polymerase V and recruits AGO4 and AGO4-bound siRNAs to form an RdDM effector complex. Promotes the expression of 24-nt RNAs. Required for the initial establishment of DNA methylation. Together with AGO4, required for transcriptional gene silencing (TGS) by DNA methylation and repressive histone modifications (H3K9me2) of several chromatin loci. The protein is Protein RNA-directed DNA methylation 3 of Arabidopsis thaliana (Mouse-ear cress).